The following is a 186-amino-acid chain: NADH-quinone oxidoreductase subunit B 2 (186 aa).

Residues 1–27 (MPSFTQPHSAPRNFQFPGQQRQGDPTM) are disordered. [4Fe-4S] cluster contacts are provided by C65, C66, C130, and C160.

The protein belongs to the complex I 20 kDa subunit family. In terms of assembly, NDH-1 is composed of 14 different subunits. Subunits NuoB, C, D, E, F, and G constitute the peripheral sector of the complex. Requires [4Fe-4S] cluster as cofactor.

The protein resides in the cell inner membrane. The enzyme catalyses a quinone + NADH + 5 H(+)(in) = a quinol + NAD(+) + 4 H(+)(out). NDH-1 shuttles electrons from NADH, via FMN and iron-sulfur (Fe-S) centers, to quinones in the respiratory chain. The immediate electron acceptor for the enzyme in this species is believed to be ubiquinone. Couples the redox reaction to proton translocation (for every two electrons transferred, four hydrogen ions are translocated across the cytoplasmic membrane), and thus conserves the redox energy in a proton gradient. This Rhizobium etli (strain ATCC 51251 / DSM 11541 / JCM 21823 / NBRC 15573 / CFN 42) protein is NADH-quinone oxidoreductase subunit B 2.